We begin with the raw amino-acid sequence, 185 residues long: HTH-type transcriptional regulator Hpr (185 aa).

Positions 13-157 (AMIFSQRIAQ…LIAILRNIYG (145 aa)) constitute an HTH marR-type domain. The segment at residues 63-86 (ISEIAKFGVMHVSTAFNFSKKLEE) is a DNA-binding region (H-T-H motif).

As to quaternary structure, homodimer.

Negative regulator of protease production and sporulation. In Bacillus cytotoxicus (strain DSM 22905 / CIP 110041 / 391-98 / NVH 391-98), this protein is HTH-type transcriptional regulator Hpr.